The chain runs to 454 residues: Glutaredoxin domain-containing cysteine-rich protein CG31559 (454 aa).

Disordered regions lie at residues 30–88 (ETAD…QRQK) and 217–239 (RSAR…GSDS). Residues 33-45 (DSGNGSDLESTGL) are compositionally biased toward polar residues. The segment covering 58–69 (SSLGSDSMHGSS) has biased composition (low complexity). Residues 70–84 (TEYVRQSASQPSGQR) show a composition bias toward polar residues. Positions 217 to 227 (RSARSGDEADH) are enriched in basic and acidic residues. The region spanning 295 to 400 (NAKNFKEKDL…QLLKPYKSMA (106 aa)) is the Glutaredoxin domain.

It belongs to the GRXCR1 family.

This chain is Glutaredoxin domain-containing cysteine-rich protein CG31559, found in Drosophila melanogaster (Fruit fly).